The primary structure comprises 264 residues: Thymidylate synthase (264 aa).

A dUMP-binding site is contributed by R21. H51 provides a ligand contact to (6R)-5,10-methylene-5,6,7,8-tetrahydrofolate. 126–127 (RR) serves as a coordination point for dUMP. Residue C146 is the Nucleophile of the active site. Residues 166 to 169 (RSAD), N177, and 207 to 209 (HLY) contribute to the dUMP site. D169 serves as a coordination point for (6R)-5,10-methylene-5,6,7,8-tetrahydrofolate. Residue A263 participates in (6R)-5,10-methylene-5,6,7,8-tetrahydrofolate binding.

The protein belongs to the thymidylate synthase family. Bacterial-type ThyA subfamily. Homodimer.

The protein localises to the cytoplasm. It catalyses the reaction dUMP + (6R)-5,10-methylene-5,6,7,8-tetrahydrofolate = 7,8-dihydrofolate + dTMP. It participates in pyrimidine metabolism; dTTP biosynthesis. Its function is as follows. Catalyzes the reductive methylation of 2'-deoxyuridine-5'-monophosphate (dUMP) to 2'-deoxythymidine-5'-monophosphate (dTMP) while utilizing 5,10-methylenetetrahydrofolate (mTHF) as the methyl donor and reductant in the reaction, yielding dihydrofolate (DHF) as a by-product. This enzymatic reaction provides an intracellular de novo source of dTMP, an essential precursor for DNA biosynthesis. The sequence is that of Thymidylate synthase from Allorhizobium ampelinum (strain ATCC BAA-846 / DSM 112012 / S4) (Agrobacterium vitis (strain S4)).